Here is a 321-residue protein sequence, read N- to C-terminus: Probable pectate lyase A (321 aa).

Residues 1 to 18 (MKFVATLIACGLSGLALA) form the signal peptide. An N-linked (GlcNAc...) asparagine glycan is attached at Asn93. Residues Asp134, Asp163, and Asp167 each contribute to the Ca(2+) site. Arg220 is a catalytic residue. N-linked (GlcNAc...) asparagine glycosylation is present at Asn238.

This sequence belongs to the polysaccharide lyase 1 family. Ca(2+) is required as a cofactor.

It localises to the secreted. The enzyme catalyses Eliminative cleavage of (1-&gt;4)-alpha-D-galacturonan to give oligosaccharides with 4-deoxy-alpha-D-galact-4-enuronosyl groups at their non-reducing ends.. Pectinolytic enzyme consist of four classes of enzymes: pectin lyase, polygalacturonase, pectin methylesterase and rhamnogalacturonase. Among pectinolytic enzymes, pectin lyase is the most important in depolymerization of pectin, since it cleaves internal glycosidic bonds of highly methylated pectins. Favors pectate, the anion, over pectin, the methyl ester. The sequence is that of Probable pectate lyase A (plyA) from Neosartorya fischeri (strain ATCC 1020 / DSM 3700 / CBS 544.65 / FGSC A1164 / JCM 1740 / NRRL 181 / WB 181) (Aspergillus fischerianus).